Here is a 196-residue protein sequence, read N- to C-terminus: Agamous-like MADS-box protein AGL70 (196 aa).

An MADS-box domain is found at 1–61 (MGRRKVEIKR…GKLYDSASGD (61 aa)). The Nuclear localization signal signature appears at 8–15 (IKRIENKS). A K-box domain is found at 80 to 170 (ALDLAEKIRN…ASQVGKKTFL (91 aa)).

As to expression, mostly expressed in roots, leaves and flowers, and, to a lower extent, in inflorescence, siliques, pollen and shoots.

The protein resides in the nucleus. Probable transcription factor involved in the negative regulation of flowering time, probably through the photoperiodic and vernalization pathways; more efficient in cv. Landsberg erecta than in cv. Columbia background. Prevents premature flowering. Involved in the modulation of vernalization impact on flowering according to genotype acclimation to altitude. This is Agamous-like MADS-box protein AGL70 from Arabidopsis thaliana (Mouse-ear cress).